Reading from the N-terminus, the 137-residue chain is Small ribosomal subunit protein bS6 (137 aa).

It belongs to the bacterial ribosomal protein bS6 family.

Its function is as follows. Binds together with bS18 to 16S ribosomal RNA. This chain is Small ribosomal subunit protein bS6, found in Mycoplasma mycoides subsp. mycoides SC (strain CCUG 32753 / NCTC 10114 / PG1).